The following is a 440-amino-acid chain: Transposon Ty1-PR3 Gag polyprotein (440 aa).

Polar residues-rich tracts occupy residues Met1–Ser23, Thr48–Ser60, and Gln127–Phe152. 3 disordered regions span residues Met1–Gln93, Pro126–Pro173, and Gly352–Tyr440. Residues Thr153–Thr165 are compositionally biased toward low complexity. The interval Asn299–His401 is RNA-binding. The span at Asn402–Ser418 shows a compositional bias: low complexity. Ser416 carries the post-translational modification Phosphoserine. Positions Lys419–Asn428 are enriched in polar residues. The span at Asn429 to Tyr440 shows a compositional bias: basic and acidic residues.

In terms of assembly, homotrimer.

The protein localises to the cytoplasm. In terms of biological role, capsid protein (CA) is the structural component of the virus-like particle (VLP), forming the shell that encapsulates the retrotransposons dimeric RNA genome. The particles are assembled from trimer-clustered units and there are holes in the capsid shells that allow for the diffusion of macromolecules. CA also has nucleocapsid-like chaperone activity, promoting primer tRNA(i)-Met annealing to the multipartite primer-binding site (PBS), dimerization of Ty1 RNA and initiation of reverse transcription. The polypeptide is Transposon Ty1-PR3 Gag polyprotein (TY1A-PR3) (Saccharomyces cerevisiae (strain ATCC 204508 / S288c) (Baker's yeast)).